A 300-amino-acid chain; its full sequence is 4-hydroxy-tetrahydrodipicolinate synthase (300 aa).

Residue T45 coordinates pyruvate. Catalysis depends on Y140, which acts as the Proton donor/acceptor. The active-site Schiff-base intermediate with substrate is K169. I210 is a binding site for pyruvate.

The protein belongs to the DapA family. In terms of assembly, homotetramer; dimer of dimers.

The protein localises to the cytoplasm. The catalysed reaction is L-aspartate 4-semialdehyde + pyruvate = (2S,4S)-4-hydroxy-2,3,4,5-tetrahydrodipicolinate + H2O + H(+). It participates in amino-acid biosynthesis; L-lysine biosynthesis via DAP pathway; (S)-tetrahydrodipicolinate from L-aspartate: step 3/4. Catalyzes the condensation of (S)-aspartate-beta-semialdehyde [(S)-ASA] and pyruvate to 4-hydroxy-tetrahydrodipicolinate (HTPA). In Helicobacter pylori (strain J99 / ATCC 700824) (Campylobacter pylori J99), this protein is 4-hydroxy-tetrahydrodipicolinate synthase.